The sequence spans 192 residues: Fe/S biogenesis protein NfuA (192 aa).

Residues cysteine 149 and cysteine 152 each coordinate [4Fe-4S] cluster.

This sequence belongs to the NfuA family. In terms of assembly, homodimer. The cofactor is [4Fe-4S] cluster.

Involved in iron-sulfur cluster biogenesis. Binds a 4Fe-4S cluster, can transfer this cluster to apoproteins, and thereby intervenes in the maturation of Fe/S proteins. Could also act as a scaffold/chaperone for damaged Fe/S proteins. The chain is Fe/S biogenesis protein NfuA from Shewanella loihica (strain ATCC BAA-1088 / PV-4).